We begin with the raw amino-acid sequence, 102 residues long: NADH-quinone oxidoreductase subunit K (102 aa).

The next 3 helical transmembrane spans lie at 6–26 (LEHG…GLMV), 30–50 (ILFV…AFIV), and 62–82 (VMFI…LAIL).

Belongs to the complex I subunit 4L family. NDH-1 is composed of 13 different subunits. Subunits NuoA, H, J, K, L, M, N constitute the membrane sector of the complex.

Its subcellular location is the cell inner membrane. It carries out the reaction a quinone + NADH + 5 H(+)(in) = a quinol + NAD(+) + 4 H(+)(out). NDH-1 shuttles electrons from NADH, via FMN and iron-sulfur (Fe-S) centers, to quinones in the respiratory chain. The immediate electron acceptor for the enzyme in this species is believed to be ubiquinone. Couples the redox reaction to proton translocation (for every two electrons transferred, four hydrogen ions are translocated across the cytoplasmic membrane), and thus conserves the redox energy in a proton gradient. The sequence is that of NADH-quinone oxidoreductase subunit K from Pseudomonas fluorescens (strain SBW25).